The chain runs to 503 residues: V-type proton ATPase subunit B (503 aa).

R378 provides a ligand contact to ATP. A phosphoserine mark is found at S491, S492, S502, and S503.

This sequence belongs to the ATPase alpha/beta chains family. As to quaternary structure, V-ATPase is a heteromultimeric enzyme composed of a peripheral catalytic V1 complex (components A to H) attached to an integral membrane V0 proton pore complex (components: a, c, c', c'', d, e, f and VOA1). Interacts with rav1.

The protein resides in the vacuole membrane. Functionally, non-catalytic subunit of the V1 complex of vacuolar(H+)-ATPase (V-ATPase), a multisubunit enzyme composed of a peripheral complex (V1) that hydrolyzes ATP and a membrane integral complex (V0) that translocates protons. V-ATPase is responsible for acidifying and maintaining the pH of intracellular compartments. The polypeptide is V-type proton ATPase subunit B (Schizosaccharomyces pombe (strain 972 / ATCC 24843) (Fission yeast)).